A 119-amino-acid chain; its full sequence is Large ribosomal subunit protein bL20 (119 aa).

This sequence belongs to the bacterial ribosomal protein bL20 family.

Functionally, binds directly to 23S ribosomal RNA and is necessary for the in vitro assembly process of the 50S ribosomal subunit. It is not involved in the protein synthesizing functions of that subunit. The polypeptide is Large ribosomal subunit protein bL20 (Streptococcus pneumoniae serotype 2 (strain D39 / NCTC 7466)).